Consider the following 352-residue polypeptide: MPTINFGGVEENVVTSEEFTLKKAREVLKNEVITVLGYGVQGPAQALNLKDNGFEVIIGQLEGDAYWEKAIADGFVPGKTLFPIEEAAKKGTIIKMLLSDAGQVAVWPKVKKCLKKGDALYFSHGFGIVYKDQTGIVPPKNVDVILVAPKGSGTNVRRNFKDGSGINSSYAVFQDATGRAEERTIALGIAIGSGYLFPTTFEKEVFSDLTGERGVLMGCLAGTMEAQYNVLRKHGHSPSEAFNETVEELTQSLIRLVAENGMDWMFANCSTTAQRGALDWAPKFRDAVAPVFDSLYRRVKNGAETRRVLKVNSAPNYLEKLRKELDTIKNSEMWQAGAAVRALRPENRKKKK.

Residues E11–T199 form the KARI N-terminal Rossmann domain. Residues Y38–Q41 and D100–Q103 each bind NAD(+). The active site involves H124. Residue G153 coordinates NAD(+). Residues T200–N347 enclose the KARI C-terminal knotted domain. The Mg(2+) site is built by D208, E212, E244, and E248. Position 270 (S270) interacts with substrate.

It belongs to the ketol-acid reductoisomerase family. Requires Mg(2+) as cofactor.

It carries out the reaction (2R)-2,3-dihydroxy-3-methylbutanoate + NAD(+) = (2S)-2-acetolactate + NADH + H(+). It participates in amino-acid biosynthesis; L-isoleucine biosynthesis; L-isoleucine from 2-oxobutanoate: step 2/4. It functions in the pathway amino-acid biosynthesis; L-valine biosynthesis; L-valine from pyruvate: step 2/4. Involved in the biosynthesis of branched-chain amino acids (BCAA). Catalyzes an alkyl-migration followed by a ketol-acid reduction of (S)-2-acetolactate (S2AL) to yield (R)-2,3-dihydroxy-isovalerate. In the isomerase reaction, S2AL is rearranged via a Mg-dependent methyl migration to produce 3-hydroxy-3-methyl-2-ketobutyrate (HMKB). In the reductase reaction, this 2-ketoacid undergoes a metal-dependent reduction by NADH to yield (R)-2,3-dihydroxy-isovalerate. The polypeptide is Ketol-acid reductoisomerase (NAD(+)) (Desulfosudis oleivorans (strain DSM 6200 / JCM 39069 / Hxd3) (Desulfococcus oleovorans)).